The chain runs to 296 residues: Glycine--tRNA ligase alpha subunit (296 aa).

Belongs to the class-II aminoacyl-tRNA synthetase family. As to quaternary structure, tetramer of two alpha and two beta subunits.

It localises to the cytoplasm. The enzyme catalyses tRNA(Gly) + glycine + ATP = glycyl-tRNA(Gly) + AMP + diphosphate. This chain is Glycine--tRNA ligase alpha subunit, found in Synechococcus sp. (strain WH7803).